We begin with the raw amino-acid sequence, 395 residues long: Digeranylgeranylglycerophospholipid reductase (395 aa).

Alanine 15, aspartate 34, cysteine 45, alanine 46, glycine 48, arginine 97, alanine 121, aspartate 276, and glycine 288 together coordinate FAD. A 2,3-bis-O-(geranylgeranyl)-sn-glycerol 1-phospholipid is bound by residues arginine 329 and glycine 365.

The protein belongs to the geranylgeranyl reductase family. DGGGPL reductase subfamily. The cofactor is FAD.

The catalysed reaction is a 2,3-bis-O-phytanyl-sn-glycerol 1-phospholipid + 8 A = a 2,3-bis-O-(geranylgeranyl)-sn-glycerol 1-phospholipid + 8 AH2. It catalyses the reaction 2,3-bis-O-(phytanyl)-sn-glycerol 1-phosphate + 8 A = 2,3-bis-O-(geranylgeranyl)-sn-glycerol 1-phosphate + 8 AH2. The enzyme catalyses CDP-2,3-bis-O-(geranylgeranyl)-sn-glycerol + 8 AH2 = CDP-2,3-bis-O-(phytanyl)-sn-glycerol + 8 A. It carries out the reaction archaetidylserine + 8 AH2 = 2,3-bis-O-phytanyl-sn-glycero-3-phospho-L-serine + 8 A. Its pathway is membrane lipid metabolism; glycerophospholipid metabolism. Is involved in the reduction of 2,3-digeranylgeranylglycerophospholipids (unsaturated archaeols) into 2,3-diphytanylglycerophospholipids (saturated archaeols) in the biosynthesis of archaeal membrane lipids. Catalyzes the formation of archaetidic acid (2,3-di-O-phytanyl-sn-glyceryl phosphate) from 2,3-di-O-geranylgeranylglyceryl phosphate (DGGGP) via the hydrogenation of each double bond of the isoprenoid chains. Is also probably able to reduce double bonds of geranyl groups in CDP-2,3-bis-O-(geranylgeranyl)-sn-glycerol and archaetidylserine, thus acting at various stages in the biosynthesis of archaeal membrane lipids. This is Digeranylgeranylglycerophospholipid reductase from Thermococcus gammatolerans (strain DSM 15229 / JCM 11827 / EJ3).